Reading from the N-terminus, the 78-residue chain is Large ribosomal subunit protein bL28 (78 aa).

The segment at 1-20 (MSRVCQVTGKRPAVGNNRSH) is disordered.

The protein belongs to the bacterial ribosomal protein bL28 family.

This Actinobacillus succinogenes (strain ATCC 55618 / DSM 22257 / CCUG 43843 / 130Z) protein is Large ribosomal subunit protein bL28.